A 119-amino-acid polypeptide reads, in one-letter code: MPRVKRGVTARARHKKILKLAKGYYGARSRTYRVAVQAVIKAGQYAYRDRRQKKRQFRQLWIARINAASRQNGLSYSRFINGLKKASIEIDRKILADIAVFDKVVFATLVEKAKEALTK.

This sequence belongs to the bacterial ribosomal protein bL20 family.

Binds directly to 23S ribosomal RNA and is necessary for the in vitro assembly process of the 50S ribosomal subunit. It is not involved in the protein synthesizing functions of that subunit. This is Large ribosomal subunit protein bL20 from Shewanella amazonensis (strain ATCC BAA-1098 / SB2B).